The primary structure comprises 231 residues: Probable glutathione S-transferase GSTU1 (231 aa).

The region spanning 5 to 84 (KELVLLDFWV…YLDDAFPGTP (80 aa)) is the GST N-terminal domain. Glutathione-binding positions include Ser-15, Lys-42, Ile-56, and 68 to 69 (ES). Positions 97 to 220 (AAYARATARF…LPSPEKVYDF (124 aa)) constitute a GST C-terminal domain.

Belongs to the GST superfamily. Tau family.

It catalyses the reaction RX + glutathione = an S-substituted glutathione + a halide anion + H(+). Conjugation of reduced glutathione to a wide number of exogenous and endogenous hydrophobic electrophiles. This chain is Probable glutathione S-transferase GSTU1 (GSTU1), found in Oryza sativa subsp. indica (Rice).